The following is a 416-amino-acid chain: Tyrosine--tRNA ligase (416 aa).

Y37 is a binding site for L-tyrosine. A 'HIGH' region motif is present at residues 42 to 51 (PTADSLHVGN). Residues Y176 and Q180 each coordinate L-tyrosine. Positions 236-240 (KMGKS) match the 'KMSKS' region motif. Residue K239 participates in ATP binding. The region spanning 350–416 (LPAFRVFQEA…KKKHILLRPV (67 aa)) is the S4 RNA-binding domain.

This sequence belongs to the class-I aminoacyl-tRNA synthetase family. TyrS type 1 subfamily. In terms of assembly, homodimer.

The protein localises to the cytoplasm. It catalyses the reaction tRNA(Tyr) + L-tyrosine + ATP = L-tyrosyl-tRNA(Tyr) + AMP + diphosphate + H(+). In terms of biological role, catalyzes the attachment of tyrosine to tRNA(Tyr) in a two-step reaction: tyrosine is first activated by ATP to form Tyr-AMP and then transferred to the acceptor end of tRNA(Tyr). This Gluconobacter oxydans (strain 621H) (Gluconobacter suboxydans) protein is Tyrosine--tRNA ligase.